Here is a 158-residue protein sequence, read N- to C-terminus: MSKTPRKSAASPSLQLGQAVEWPDRPEAAKLDRVPNPQKDTHFLARFTAPEFTSLCPVTGQPDFAHLVIDYVPGPWLLESKSLKLYLASFRNHGAFHEDCTVAIGKRIATEIKPKWLRIGGYWYPRGGIPIDVFWQTGKLPKDVWVPDQGVQPYRGRG.

Residue cysteine 56 is the Thioimide intermediate of the active site. Aspartate 63 functions as the Proton donor in the catalytic mechanism. Residues 78 to 80 (LES) and 97 to 98 (HE) each bind substrate.

This sequence belongs to the GTP cyclohydrolase I family. QueF type 1 subfamily.

The protein resides in the cytoplasm. The enzyme catalyses 7-aminomethyl-7-carbaguanine + 2 NADP(+) = 7-cyano-7-deazaguanine + 2 NADPH + 3 H(+). It participates in tRNA modification; tRNA-queuosine biosynthesis. Its function is as follows. Catalyzes the NADPH-dependent reduction of 7-cyano-7-deazaguanine (preQ0) to 7-aminomethyl-7-deazaguanine (preQ1). This is NADPH-dependent 7-cyano-7-deazaguanine reductase from Rhodopseudomonas palustris (strain TIE-1).